The chain runs to 338 residues: Glycerol-3-phosphate dehydrogenase [NAD(P)+] (338 aa).

Residues Ser-11, Trp-12, His-32, His-33, and Lys-109 each coordinate NADPH. Positions 109, 140, and 142 each coordinate sn-glycerol 3-phosphate. Residue Ala-144 participates in NADPH binding. Sn-glycerol 3-phosphate contacts are provided by Lys-195, Asp-248, Ser-258, Arg-259, and Asn-260. Catalysis depends on Lys-195, which acts as the Proton acceptor. Residue Arg-259 participates in NADPH binding. 2 residues coordinate NADPH: Val-283 and Glu-285.

Belongs to the NAD-dependent glycerol-3-phosphate dehydrogenase family.

The protein resides in the cytoplasm. It carries out the reaction sn-glycerol 3-phosphate + NAD(+) = dihydroxyacetone phosphate + NADH + H(+). The enzyme catalyses sn-glycerol 3-phosphate + NADP(+) = dihydroxyacetone phosphate + NADPH + H(+). Its pathway is membrane lipid metabolism; glycerophospholipid metabolism. Functionally, catalyzes the reduction of the glycolytic intermediate dihydroxyacetone phosphate (DHAP) to sn-glycerol 3-phosphate (G3P), the key precursor for phospholipid synthesis. This chain is Glycerol-3-phosphate dehydrogenase [NAD(P)+], found in Leuconostoc citreum (strain KM20).